The chain runs to 305 residues: Outer membrane protein assembly factor BamD (305 aa).

The N-terminal stretch at 1–24 is a signal peptide; sequence MLRIFQGRPAVTIAAVLVAASVAG. Cysteine 25 carries N-palmitoyl cysteine lipidation. Residue cysteine 25 is the site of S-diacylglycerol cysteine attachment. TPR repeat units follow at residues 41-74, 78-111, 113-136, and 174-207; these read VELL…HPYS, RRSI…YPGN, SAQY…NRDQ, and AGKE…HQTT.

This sequence belongs to the BamD family. Part of the Bam complex.

It is found in the cell outer membrane. Functionally, part of the outer membrane protein assembly complex, which is involved in assembly and insertion of beta-barrel proteins into the outer membrane. The sequence is that of Outer membrane protein assembly factor BamD from Caulobacter vibrioides (strain ATCC 19089 / CIP 103742 / CB 15) (Caulobacter crescentus).